The primary structure comprises 172 residues: Bcl-2-related protein A1 (172 aa).

The BH1 motif lies at 77–97 (KEFEDGIINWGRIVTIFAFGG). Positions 132-147 (EWIRQNGGWEDGFIKK) match the BH2 motif.

The protein belongs to the Bcl-2 family. In terms of assembly, interacts directly with BCL2L11/BIM and PMAIP1. Interacts directly with BAK1, BID, BMF and BBC3. Interacts with BOP. Interacts with isoform 3, isoform 4 and isoform 5 of ING4. Interacts with UBQLN4. As to expression, expressed in hemopoietic tissues, including bone marrow, spleen and thymus.

Its subcellular location is the cytoplasm. Functionally, retards apoptosis induced by IL-3 deprivation. May function in the response of hemopoietic cells to external signals and in maintaining endothelial survival during infection. Can inhibit apoptosis induced by serum starvation in the mammary epithelial cell line HC11. In Mus musculus (Mouse), this protein is Bcl-2-related protein A1 (Bcl2a1).